The sequence spans 146 residues: Large ribosomal subunit protein uL15 (146 aa).

Residues 1-13 (MKLHELKAAEGSR) are compositionally biased toward basic and acidic residues. The tract at residues 1–56 (MKLHELKAAEGSRRVRNRVGRGAATGNGKTSGRGQKGQKARSGGKLRPGFEGGQLP) is disordered. A compositionally biased stretch (gly residues) spans 23-35 (AATGNGKTSGRGQ).

Belongs to the universal ribosomal protein uL15 family. Part of the 50S ribosomal subunit.

Its function is as follows. Binds to the 23S rRNA. The sequence is that of Large ribosomal subunit protein uL15 from Staphylococcus epidermidis (strain ATCC 35984 / DSM 28319 / BCRC 17069 / CCUG 31568 / BM 3577 / RP62A).